The sequence spans 360 residues: Phenylalanine--tRNA ligase alpha subunit (360 aa).

Position 260 (Glu-260) interacts with Mg(2+).

Belongs to the class-II aminoacyl-tRNA synthetase family. Phe-tRNA synthetase alpha subunit type 1 subfamily. Tetramer of two alpha and two beta subunits. Mg(2+) serves as cofactor.

It localises to the cytoplasm. The catalysed reaction is tRNA(Phe) + L-phenylalanine + ATP = L-phenylalanyl-tRNA(Phe) + AMP + diphosphate + H(+). The protein is Phenylalanine--tRNA ligase alpha subunit of Methylobacterium sp. (strain 4-46).